Reading from the N-terminus, the 533-residue chain is 2-isopropylmalate synthase (533 aa).

The 262-residue stretch at 8–269 (ILIFDTTLRD…YFNPFLGRPA (262 aa)) folds into the Pyruvate carboxyltransferase domain. Mn(2+) is bound by residues D17, H208, H210, and N244. The tract at residues 408 to 533 (RLERVQVSCG…REHPPVVASL (126 aa)) is regulatory domain.

The protein belongs to the alpha-IPM synthase/homocitrate synthase family. LeuA type 1 subfamily. In terms of assembly, homodimer. It depends on Mn(2+) as a cofactor.

It localises to the cytoplasm. The catalysed reaction is 3-methyl-2-oxobutanoate + acetyl-CoA + H2O = (2S)-2-isopropylmalate + CoA + H(+). It participates in amino-acid biosynthesis; L-leucine biosynthesis; L-leucine from 3-methyl-2-oxobutanoate: step 1/4. Its function is as follows. Catalyzes the condensation of the acetyl group of acetyl-CoA with 3-methyl-2-oxobutanoate (2-ketoisovalerate) to form 3-carboxy-3-hydroxy-4-methylpentanoate (2-isopropylmalate). This Synechocystis sp. (strain ATCC 27184 / PCC 6803 / Kazusa) protein is 2-isopropylmalate synthase.